A 545-amino-acid chain; its full sequence is Lysine--tRNA ligase (545 aa).

A 'HIGH' region motif is present at residues 42–50 (PSGVPHIGH). Residues 307–311 (PLSSS) carry the 'KMSKS' region motif.

This sequence belongs to the class-I aminoacyl-tRNA synthetase family.

Its subcellular location is the cytoplasm. The catalysed reaction is tRNA(Lys) + L-lysine + ATP = L-lysyl-tRNA(Lys) + AMP + diphosphate. This is Lysine--tRNA ligase from Haloarcula marismortui (strain ATCC 43049 / DSM 3752 / JCM 8966 / VKM B-1809) (Halobacterium marismortui).